Reading from the N-terminus, the 2074-residue chain is Cell adhesion molecule Dscam2 (2074 aa).

Positions 1–21 (MWISSRFFVILLLLNLDNTCS) are cleaved as a signal peptide. Topologically, residues 22–1619 (EPFEAHLRGP…QTTVIFANIN (1598 aa)) are extracellular. 8 Ig-like C2-type domains span residues 31-120 (PGFV…RIVS), 238-326 (PSVV…LRLT), 330-417 (PIQV…AELQ), 422-516 (PPVL…ARLN), 521-607 (PYIR…GEVT), 612-698 (PSIE…IKYT), 707-802 (PRWI…LKVN), and 805-902 (PYFS…LQVQ). 8 cysteine pairs are disulfide-bonded: Cys-53-Cys-109, Cys-259-Cys-310, Cys-352-Cys-400, Cys-444-Cys-500, Cys-541-Cys-590, Cys-633-Cys-686, Cys-728-Cys-783, and Cys-826-Cys-884. 4 Fibronectin type-III domains span residues 907 to 1003 (PPSV…TEPQ), 1008 to 1108 (PPLS…TMED), 1113 to 1211 (PPED…SEED), and 1215 to 1311 (APAD…TNRI). The 89-residue stretch at 1312-1400 (PARIISFGGP…DRLTHTLIVQ (89 aa)) folds into the Ig-like C2-type 9 domain. Cys-1334 and Cys-1382 are oxidised to a cystine. Fibronectin type-III domains are found at residues 1402 to 1495 (PPTA…TQGQ) and 1496 to 1595 (SPGH…TKDG). The chain crosses the membrane as a helical span at residues 1620–1640 (LLIPTIAAVSGMFCTIIMIIV). At 1641-2074 (CYRHMLKNAP…KFFTAPTLPK (434 aa)) the chain is on the cytoplasmic side. 4 disordered regions span residues 1739-1766 (EGCS…HQRP), 1778-1917 (PFHN…KSIS), 1936-1974 (SPSI…SLKQ), and 2011-2074 (PSSQ…TLPK). Positions 1757 to 1766 (THHHHHHQRP) are enriched in basic residues. Residues 1831–1846 (AQSSTSSDLSPMSEQK) are compositionally biased toward polar residues. Basic residues predominate over residues 1848-1858 (LPRRGRSRYHH). Residues 1859–1868 (QQYQFSTNTT) show a composition bias toward polar residues. 3 stretches are compositionally biased toward low complexity: residues 1875-1903 (NKMN…SNSN), 1942-1974 (QQQK…SLKQ), and 2036-2051 (SQQS…QQHP). Polar residues predominate over residues 2055 to 2066 (LNPSTAMLSSKF).

The protein resides in the membrane. Its function is as follows. Cell adhesion molecule. In Drosophila melanogaster (Fruit fly), this protein is Cell adhesion molecule Dscam2 (Dscam2).